Here is a 547-residue protein sequence, read N- to C-terminus: Probable bifunctional tRNA threonylcarbamoyladenosine biosynthesis protein (547 aa).

A kae1 region spans residues 1–329 (MKKTFILGIE…FRTDDVKVTW (329 aa)). 3 residues coordinate Fe cation: histidine 113, histidine 117, and tyrosine 134. L-threonylcarbamoyladenylate contacts are provided by residues 134–138 (YVSGA), aspartate 166, glycine 179, glutamate 183, and asparagine 262. Residue aspartate 290 coordinates Fe cation. The Protein kinase domain maps to 340–547 (EISPETFFRM…EEIKKRARYA (208 aa)). Residues 355-363 (LDNGAEAVV) and lysine 377 each bind ATP. Aspartate 464 (proton acceptor; for kinase activity) is an active-site residue.

It in the N-terminal section; belongs to the KAE1 / TsaD family. This sequence in the C-terminal section; belongs to the protein kinase superfamily. Tyr protein kinase family. BUD32 subfamily. In terms of assembly, component of the KEOPS complex that consists of Kae1, Bud32, Cgi121 and Pcc1; the whole complex dimerizes. The cofactor is Fe(2+).

Its subcellular location is the cytoplasm. The enzyme catalyses L-seryl-[protein] + ATP = O-phospho-L-seryl-[protein] + ADP + H(+). It carries out the reaction L-threonyl-[protein] + ATP = O-phospho-L-threonyl-[protein] + ADP + H(+). It catalyses the reaction L-threonylcarbamoyladenylate + adenosine(37) in tRNA = N(6)-L-threonylcarbamoyladenosine(37) in tRNA + AMP + H(+). In terms of biological role, required for the formation of a threonylcarbamoyl group on adenosine at position 37 (t(6)A37) in tRNAs that read codons beginning with adenine. Is a component of the KEOPS complex that is probably involved in the transfer of the threonylcarbamoyl moiety of threonylcarbamoyl-AMP (TC-AMP) to the N6 group of A37. The Kae1 domain likely plays a direct catalytic role in this reaction. The Bud32 domain probably displays kinase activity that regulates Kae1 function. The polypeptide is Probable bifunctional tRNA threonylcarbamoyladenosine biosynthesis protein (Methanosarcina mazei (strain ATCC BAA-159 / DSM 3647 / Goe1 / Go1 / JCM 11833 / OCM 88) (Methanosarcina frisia)).